A 325-amino-acid chain; its full sequence is Diadenosine 5',5'''-P1,P4-tetraphosphate phosphorylase 2 (325 aa).

Substrate contacts are provided by residues Lys-53, 92-93 (NK), Asn-148, and 154-157 (GSSQ). The active-site Nucleophile is His-161. Residues Gln-163, 277-279 (NST), Met-284, and Lys-288 each bind substrate.

Belongs to the ATP adenylyltransferase family. As to quaternary structure, monomer. The cofactor is a divalent metal cation.

The protein resides in the cytoplasm. The protein localises to the nucleus. The enzyme catalyses ADP + ATP + H(+) = P(1),P(4)-bis(5'-adenosyl) tetraphosphate + phosphate. The catalysed reaction is sulfate + ADP + H(+) = adenosine 5'-phosphosulfate + phosphate. Ap4A phosphorylase catalyzes the phosphorolytic degradation of bis(5'-adenosyl) tetraphosphate (Ap4A) into ADP and ATP. Can also use other Np4N' nucleotides (where N and N' stand for A,C,G or U) as substrates, but prefers A-containing substrates. Cannot catalyze the reverse reaction. Additionally, this enzyme can also catalyze the phosphorolytic degradation of adenosine 5'-phosphosulfate (AMPS) into ADP and sulfate, the reversible exchange reaction between inorganic phosphate and the beta-phosphate of a nucleoside diphosphate (NDP), and the synthesis of Ap4A from AMPS plus ATP. The chain is Diadenosine 5',5'''-P1,P4-tetraphosphate phosphorylase 2 from Saccharomyces cerevisiae (strain ATCC 204508 / S288c) (Baker's yeast).